A 244-amino-acid chain; its full sequence is Uridylate kinase (244 aa).

18 to 21 (KISG) is an ATP binding site. The involved in allosteric activation by GTP stretch occupies residues 26–31 (GDQGYG). G60 is a UMP binding site. Residues G61 and R65 each contribute to the ATP site. UMP contacts are provided by residues D80 and 141-148 (TGNPYFTT). ATP contacts are provided by T168, Y174, and D177.

This sequence belongs to the UMP kinase family. In terms of assembly, homohexamer.

The protein resides in the cytoplasm. The enzyme catalyses UMP + ATP = UDP + ADP. It participates in pyrimidine metabolism; CTP biosynthesis via de novo pathway; UDP from UMP (UMPK route): step 1/1. With respect to regulation, allosterically activated by GTP. Inhibited by UTP. Its function is as follows. Catalyzes the reversible phosphorylation of UMP to UDP. This Paracoccus denitrificans (strain Pd 1222) protein is Uridylate kinase.